A 255-amino-acid polypeptide reads, in one-letter code: Probable transcriptional regulator ycf27 (255 aa).

Residues 9 to 122 (KILIADDESS…ELEARIRCVL (114 aa)) form the Response regulatory domain. D58 carries the post-translational modification 4-aspartylphosphate. Residues 78–96 (DIPIIMLTALGDVTDRITG) constitute a DNA-binding region (H-T-H motif). Residues 137-238 (SGIINIGFLK…SRGTGYLFQR (102 aa)) constitute a DNA-binding region (ompR/PhoB-type).

It is found in the plastid. It localises to the chloroplast. Its function is as follows. Probable promoter-specific protein mediating the interaction between DNA and RNA polymerase. The protein is Probable transcriptional regulator ycf27 (ycf27) of Galdieria sulphuraria (Red alga).